The primary structure comprises 700 residues: Peroxisomal acyl-coenzyme A oxidase 1 (700 aa).

FAD-binding positions include Thr147, Gly186, and 412-417 (CGGHGY). Glu437 (proton acceptor) is an active-site residue. Positions 698 to 700 (SKL) match the Microbody targeting signal motif.

It belongs to the acyl-CoA oxidase family. It depends on FAD as a cofactor.

Its subcellular location is the peroxisome. The enzyme catalyses a 2,3-saturated acyl-CoA + O2 = a (2E)-enoyl-CoA + H2O2. Its function is as follows. Catalyzes the desaturation of acyl-CoAs to 2-trans-enoyl-CoAs. First enzyme of the fatty acid beta-oxidation pathway. The sequence is that of Peroxisomal acyl-coenzyme A oxidase 1 (acox1) from Dictyostelium discoideum (Social amoeba).